The primary structure comprises 806 residues: Leucine--tRNA ligase (806 aa).

The 'HIGH' region signature appears at 38-48 (PYPSGEIHMGH). Residues 572–576 (KMSKS) carry the 'KMSKS' region motif. ATP is bound at residue Lys575.

The protein belongs to the class-I aminoacyl-tRNA synthetase family.

Its subcellular location is the cytoplasm. It catalyses the reaction tRNA(Leu) + L-leucine + ATP = L-leucyl-tRNA(Leu) + AMP + diphosphate. In Helicobacter pylori (strain ATCC 700392 / 26695) (Campylobacter pylori), this protein is Leucine--tRNA ligase.